Consider the following 302-residue polypeptide: Probable alpha-L-glutamate ligase (302 aa).

In terms of domain architecture, ATP-grasp spans 105–288 (LQLLARKGIP…LAGKIIEYIE (184 aa)). ATP contacts are provided by residues lysine 142, 179–180 (EF), aspartate 188, and 212–214 (RAN). 3 residues coordinate Mg(2+): aspartate 249, glutamate 261, and asparagine 263. Mn(2+)-binding residues include aspartate 249, glutamate 261, and asparagine 263.

Belongs to the RimK family. Mg(2+) is required as a cofactor. The cofactor is Mn(2+).

This is Probable alpha-L-glutamate ligase from Legionella pneumophila (strain Paris).